A 417-amino-acid chain; its full sequence is UDP-N-acetylglucosamine 1-carboxyvinyltransferase (417 aa).

22–23 (KN) is a binding site for phosphoenolpyruvate. R93 contributes to the UDP-N-acetyl-alpha-D-glucosamine binding site. The active-site Proton donor is C117. Residue C117 is modified to 2-(S-cysteinyl)pyruvic acid O-phosphothioketal. UDP-N-acetyl-alpha-D-glucosamine is bound by residues 122–126 (RPVDQ), D304, and I326.

It belongs to the EPSP synthase family. MurA subfamily.

It is found in the cytoplasm. The enzyme catalyses phosphoenolpyruvate + UDP-N-acetyl-alpha-D-glucosamine = UDP-N-acetyl-3-O-(1-carboxyvinyl)-alpha-D-glucosamine + phosphate. The protein operates within cell wall biogenesis; peptidoglycan biosynthesis. Functionally, cell wall formation. Adds enolpyruvyl to UDP-N-acetylglucosamine. The protein is UDP-N-acetylglucosamine 1-carboxyvinyltransferase of Neisseria meningitidis serogroup C (strain 053442).